A 330-amino-acid polypeptide reads, in one-letter code: MKKSFIHQQEEISFVKNTFTQYLKDKLEVVEVQGPILSKVGDGMQDNLSGVENPVSVKVLQIPDATYEVVHSLAKWKRHTLARFGFGEGEGLFVHMKALRPDEDSLDATHSVYVDQWDWEKVIPNGKRNIVYLKETVEKIYKAIRLTELAVEARYDIESILPKQITFIHTEELVERYPDLTPKERENAICKEFGAVFLIGIGGELPDGKPHDGRAPDYDDWTSESENGYKGLNGDILVWNESLGGAFELSSMGIRVDEETLRRQVEITGDEDRLELEWHKSLLNGLFPLTIGGGIGQSRMAMFLLRKRHIGEVQTSVWPQEVRDTYENIL.

Belongs to the class-II aminoacyl-tRNA synthetase family. AsnA subfamily.

The protein resides in the cytoplasm. It catalyses the reaction L-aspartate + NH4(+) + ATP = L-asparagine + AMP + diphosphate + H(+). The protein operates within amino-acid biosynthesis; L-asparagine biosynthesis; L-asparagine from L-aspartate (ammonia route): step 1/1. This Streptococcus pneumoniae serotype 19F (strain G54) protein is Aspartate--ammonia ligase.